The sequence spans 198 residues: Small ribosomal subunit protein uS4 (198 aa).

The S4 RNA-binding domain maps to 91 to 151 (SRLDNIVYRL…EKSKNLKIVE (61 aa)).

It belongs to the universal ribosomal protein uS4 family. As to quaternary structure, part of the 30S ribosomal subunit. Contacts protein S5. The interaction surface between S4 and S5 is involved in control of translational fidelity.

Its function is as follows. One of the primary rRNA binding proteins, it binds directly to 16S rRNA where it nucleates assembly of the body of the 30S subunit. In terms of biological role, with S5 and S12 plays an important role in translational accuracy. The polypeptide is Small ribosomal subunit protein uS4 (Phytoplasma australiense).